The primary structure comprises 226 residues: ATP synthase F(0) complex subunit a (226 aa).

6 consecutive transmembrane segments (helical) span residues 6-26, 68-88, 97-117, 138-158, 164-184, and 189-209; these read FASF…IIMF, WALM…LGLL, QLSM…ILGF, IPML…ALAV, ITAG…LMDI, and ATIT…VALI.

Belongs to the ATPase A chain family. In terms of assembly, component of the ATP synthase complex composed at least of ATP5F1A/subunit alpha, ATP5F1B/subunit beta, ATP5MC1/subunit c (homooctomer), MT-ATP6/subunit a, MT-ATP8/subunit 8, ATP5ME/subunit e, ATP5MF/subunit f, ATP5MG/subunit g, ATP5MK/subunit k, ATP5MJ/subunit j, ATP5F1C/subunit gamma, ATP5F1D/subunit delta, ATP5F1E/subunit epsilon, ATP5PF/subunit F6, ATP5PB/subunit b, ATP5PD/subunit d, ATP5PO/subunit OSCP. ATP synthase complex consists of a soluble F(1) head domain (subunits alpha(3) and beta(3)) - the catalytic core - and a membrane F(0) domain - the membrane proton channel (subunits c, a, 8, e, f, g, k and j). These two domains are linked by a central stalk (subunits gamma, delta, and epsilon) rotating inside the F1 region and a stationary peripheral stalk (subunits F6, b, d, and OSCP). Interacts with DNAJC30; interaction is direct.

It is found in the mitochondrion inner membrane. It carries out the reaction H(+)(in) = H(+)(out). Functionally, subunit a, of the mitochondrial membrane ATP synthase complex (F(1)F(0) ATP synthase or Complex V) that produces ATP from ADP in the presence of a proton gradient across the membrane which is generated by electron transport complexes of the respiratory chain. ATP synthase complex consist of a soluble F(1) head domain - the catalytic core - and a membrane F(1) domain - the membrane proton channel. These two domains are linked by a central stalk rotating inside the F(1) region and a stationary peripheral stalk. During catalysis, ATP synthesis in the catalytic domain of F(1) is coupled via a rotary mechanism of the central stalk subunits to proton translocation. With the subunit c (ATP5MC1), forms the proton-conducting channel in the F(0) domain, that contains two crucial half-channels (inlet and outlet) that facilitate proton movement from the mitochondrial intermembrane space (IMS) into the matrix. Protons are taken up via the inlet half-channel and released through the outlet half-channel, following a Grotthuss mechanism. In Rattus norvegicus (Rat), this protein is ATP synthase F(0) complex subunit a.